Consider the following 365-residue polypeptide: Phosphatidylcholine:ceramide cholinephosphotransferase 2 (365 aa).

A compositionally biased stretch (basic and acidic residues) spans 1–14; the sequence is MDIIETAKLEEHLE. A disordered region spans residues 1-52; it reads MDIIETAKLEEHLENQPSDPTNTYARPAEPVEEENKNGNGKPKSLSSGLRKG. The segment covering 15–24 has biased composition (polar residues); sequence NQPSDPTNTY. 4 helical membrane-spanning segments follow: residues 80–100, 128–148, 159–179, and 206–226; these read GIAF…ITVV, FSVS…QWLF, FCFI…VTTL, and LISG…DFLF. His-229 is an active-site residue. Residues 248 to 268 traverse the membrane as a helical segment; it reads FWWYHLICWLLSAAGIICILV. Active-site residues include His-272 and Asp-276. The helical transmembrane segment at 275 to 295 threads the bilayer; sequence IDVIIAYYITTRLFWWYHSMA. Residues 296 to 365 lie on the Cytoplasmic side of the membrane; the sequence is NEKNLKVSSQ…KIGEDNEKST (70 aa). S-palmitoyl cysteine attachment occurs at residues Cys-331, Cys-332, Cys-343, and Cys-348.

It belongs to the sphingomyelin synthase family. Palmitoylated on Cys-331, Cys-332, Cys-343 and Cys-348; which plays an important role in plasma membrane localization. As to expression, brain, heart, kidney, liver, muscle and stomach. Also expressed in a number of cell lines such as carcinoma HeLa cells, hepatoma Hep-G2 cells, and colon carcinoma Caco-2 cells.

It localises to the cell membrane. The protein resides in the golgi apparatus membrane. It carries out the reaction an N-acylsphing-4-enine + a 1,2-diacyl-sn-glycero-3-phosphocholine = a sphingomyelin + a 1,2-diacyl-sn-glycerol. The catalysed reaction is an N-acylsphinganine + a 1,2-diacyl-sn-glycero-3-phosphocholine = an N-acylsphinganine-1-phosphocholine + a 1,2-diacyl-sn-glycerol. The enzyme catalyses an N-acyl-(4R)-4-hydroxysphinganine + a 1,2-diacyl-sn-glycero-3-phosphocholine = an N-acyl-(4R)-4-hydroxysphinganine-phosphocholine + a 1,2-diacyl-sn-glycerol. It catalyses the reaction an N-acylsphinganine + a 1,2-diacyl-sn-glycero-3-phosphoethanolamine = an N-acylsphinganine-1-phosphoethanolamine + a 1,2-diacyl-sn-glycerol. It carries out the reaction an N-acyl-(4R)-4-hydroxysphinganine + a 1,2-diacyl-sn-glycero-3-phosphoethanolamine = an N-acyl-(4R)-4-hydroxysphinganine-1-phosphoethanolamine + a 1,2-diacyl-sn-glycerol. The catalysed reaction is an N-acylsphing-4-enine + a 1,2-diacyl-sn-glycero-3-phosphoethanolamine = an N-acylsphing-4-enine 1-phosphoethanolamine + a 1,2-diacyl-sn-glycerol. The enzyme catalyses 1,2-dihexadecanoyl-sn-glycero-3-phosphocholine + an N-acylsphing-4-enine = 1,2-dihexadecanoyl-sn-glycerol + a sphingomyelin. It catalyses the reaction 1-(9Z-octadecenoyl)-2-acyl-sn-3-glycerol + a sphingomyelin = a 1-(9Z-octadecenoyl)-2-acyl-sn-glycero-3-phosphocholine + an N-acylsphing-4-enine. It carries out the reaction N-hexadecanoylsphinganine + a 1,2-diacyl-sn-glycero-3-phosphocholine = N-hexadecanoyl-sphinganine-1-phosphocholine + a 1,2-diacyl-sn-glycerol. The catalysed reaction is N-hexadecanoyl-(4R)-hydroxysphinganine + a 1,2-diacyl-sn-glycero-3-phosphocholine = N-hexadecanoyl-(4R)-hydroxysphinganine-phosphocholine + a 1,2-diacyl-sn-glycerol. The enzyme catalyses N-hexadecanoylsphinganine + a 1,2-diacyl-sn-glycero-3-phosphoethanolamine = N-hexadecanoyl-sphinganine-1-phosphoethanolamine + a 1,2-diacyl-sn-glycerol. It catalyses the reaction N-hexadecanoyl-(4R)-hydroxysphinganine + a 1,2-diacyl-sn-glycero-3-phosphoethanolamine = N-hexadecanoyl-(4R)-hydroxysphinganine-1-phosphoethanolamine + a 1,2-diacyl-sn-glycerol. It participates in sphingolipid metabolism. With respect to regulation, inhibited by bacterial PC-phospholipase C inhibitor D609. Functionally, sphingomyelin synthase that primarily contributes to sphingomyelin synthesis and homeostasis at the plasma membrane. Catalyzes the reversible transfer of phosphocholine moiety in sphingomyelin biosynthesis: in the forward reaction transfers phosphocholine head group of phosphatidylcholine (PC) on to ceramide (CER) to form ceramide phosphocholine (sphingomyelin, SM) and diacylglycerol (DAG) as by-product, and in the reverse reaction transfers phosphocholine from SM to DAG to form PC and CER. The direction of the reaction appears to depend on the levels of CER and DAG in the plasma membrane. Does not use free phosphorylcholine or CDP-choline as donors. Can also transfer phosphoethanolamine head group of phosphatidylethanolamine (PE) on to ceramide (CER) to form ceramide phosphoethanolamine (CPE). Regulates receptor-mediated signal transduction via mitogenic DAG and proapoptotic CER, as well as via SM, a structural component of membrane rafts that serve as platforms for signal transduction and protein sorting. To a lesser extent, plays a role in secretory transport via regulation of DAG pool at the Golgi apparatus and its downstream effects on PRKD1. Required for normal bone matrix mineralization. The protein is Phosphatidylcholine:ceramide cholinephosphotransferase 2 of Homo sapiens (Human).